The chain runs to 76 residues: ATP synthase subunit c (76 aa).

2 helical membrane-spanning segments follow: residues glycine 5–isoleucine 25 and alanine 54–leucine 74.

The protein belongs to the ATPase C chain family. F-type ATPases have 2 components, F(1) - the catalytic core - and F(0) - the membrane proton channel. F(1) has five subunits: alpha(3), beta(3), gamma(1), delta(1), epsilon(1). F(0) has three main subunits: a(1), b(2) and c(10-14). The alpha and beta chains form an alternating ring which encloses part of the gamma chain. F(1) is attached to F(0) by a central stalk formed by the gamma and epsilon chains, while a peripheral stalk is formed by the delta and b chains.

The protein localises to the cell membrane. In terms of biological role, f(1)F(0) ATP synthase produces ATP from ADP in the presence of a proton or sodium gradient. F-type ATPases consist of two structural domains, F(1) containing the extramembraneous catalytic core and F(0) containing the membrane proton channel, linked together by a central stalk and a peripheral stalk. During catalysis, ATP synthesis in the catalytic domain of F(1) is coupled via a rotary mechanism of the central stalk subunits to proton translocation. Its function is as follows. Key component of the F(0) channel; it plays a direct role in translocation across the membrane. A homomeric c-ring of between 10-14 subunits forms the central stalk rotor element with the F(1) delta and epsilon subunits. This Ruminiclostridium cellulolyticum (strain ATCC 35319 / DSM 5812 / JCM 6584 / H10) (Clostridium cellulolyticum) protein is ATP synthase subunit c.